Here is a 110-residue protein sequence, read N- to C-terminus: Ribonuclease P protein component (110 aa).

It belongs to the RnpA family. In terms of assembly, consists of a catalytic RNA component (M1 or rnpB) and a protein subunit.

The enzyme catalyses Endonucleolytic cleavage of RNA, removing 5'-extranucleotides from tRNA precursor.. Its function is as follows. RNaseP catalyzes the removal of the 5'-leader sequence from pre-tRNA to produce the mature 5'-terminus. It can also cleave other RNA substrates such as 4.5S RNA. The protein component plays an auxiliary but essential role in vivo by binding to the 5'-leader sequence and broadening the substrate specificity of the ribozyme. The chain is Ribonuclease P protein component from Mesoplasma florum (strain ATCC 33453 / NBRC 100688 / NCTC 11704 / L1) (Acholeplasma florum).